Here is a 656-residue protein sequence, read N- to C-terminus: Sulfate transporter 1.3 (656 aa).

Residues 1–30 are disordered; that stretch reads MSARAHPVDDDGEISPVERSSPRQANTPYV. Topologically, residues 1–94 are cytoplasmic; it reads MSARAHPVDD…GRKYNLKLFR (94 aa). Residues 95–115 form a helical membrane-spanning segment; the sequence is GDLIAGLTIASLCIPQDIGYA. At 116–119 the chain is on the extracellular side; it reads KLAS. Residues 120 to 140 traverse the membrane as a helical segment; the sequence is LDPKYGLYSSFVPPLVYACMG. At 141 to 144 the chain is on the cytoplasmic side; the sequence is SSKD. Residues 145–165 traverse the membrane as a helical segment; sequence IAIGPVAVVSLLLGTLLRAEI. Residues 166 to 176 are Extracellular-facing; it reads DPNTNPNEYLR. The next 2 membrane-spanning stretches (helical) occupy residues 177 to 197 and 198 to 218; these read LAFT…FFRL and GFLI…GAAI. The Extracellular portion of the chain corresponds to 219 to 256; that stretch reads TIALQQLKGFLGINKFTKKTDIIAVLSSVISSAHHGWN. Residues 257 to 277 traverse the membrane as a helical segment; sequence WQTILISASFLIFLLISKFIG. Residues 278 to 283 lie on the Cytoplasmic side of the membrane; the sequence is KRNKKL. The helical transmembrane segment at 284–304 threads the bilayer; sequence FWIPAIAPLVSVIISTFFVYI. The Extracellular portion of the chain corresponds to 305 to 342; that stretch reads TRADKKGVQIVKHLDKGLNPSSLRLIYFSGDYLLKGFR. Residues 343–363 traverse the membrane as a helical segment; sequence IGVVSGMVALTEAVAIGRTFA. Topologically, residues 364–375 are cytoplasmic; sequence AMKDYQIDGNKE. The chain crosses the membrane as a helical span at residues 376-396; that stretch reads MVALGAMNVIGSMTSCYVSTG. The Extracellular portion of the chain corresponds to 397–412; that stretch reads SFSRSAVNFMAGCQTA. The chain crosses the membrane as a helical span at residues 413–433; sequence VSNIIMSIVVLLTLLFLTPLF. Topologically, residues 434–441 are cytoplasmic; the sequence is KYTPNAIL. Residues 442-462 traverse the membrane as a helical segment; sequence AAIIINAVIPLVDVNATILIF. At 463–473 the chain is on the extracellular side; that stretch reads KIDKLDFVACM. A helical transmembrane segment spans residues 474 to 494; it reads GAFFGVIFVSVEIGLLIAVGI. The Cytoplasmic segment spans residues 495 to 656; the sequence is SFAKILLQVT…SCSPKLSDEV (162 aa). Positions 525–648 constitute an STAS domain; it reads QYPEATRIPG…LTVAEAVDSC (124 aa).

It belongs to the SLC26A/SulP transporter (TC 2.A.53) family. Expressed in the phloem of cotyledons, hypocotyls and roots.

It is found in the membrane. High-affinity H(+)/sulfate cotransporter that mediates the loading of sulfate into the sieve tube. Plays a central role in the regulation of sulfate assimilation. The polypeptide is Sulfate transporter 1.3 (SULTR1;3) (Arabidopsis thaliana (Mouse-ear cress)).